The primary structure comprises 227 residues: 2,3-bisphosphoglycerate-dependent phosphoglycerate mutase (227 aa).

Substrate-binding positions include 7–14, 20–21, Arg-59, 86–89, Lys-97, 113–114, and 182–183; these read RHGLSEWN, TG, ERHY, RR, and GN. Residue His-8 is the Tele-phosphohistidine intermediate of the active site. Residue Glu-86 is the Proton donor/acceptor of the active site.

The protein belongs to the phosphoglycerate mutase family. BPG-dependent PGAM subfamily. In terms of assembly, homodimer.

It catalyses the reaction (2R)-2-phosphoglycerate = (2R)-3-phosphoglycerate. It functions in the pathway carbohydrate degradation; glycolysis; pyruvate from D-glyceraldehyde 3-phosphate: step 3/5. In terms of biological role, catalyzes the interconversion of 2-phosphoglycerate and 3-phosphoglycerate. The chain is 2,3-bisphosphoglycerate-dependent phosphoglycerate mutase from Actinobacillus succinogenes (strain ATCC 55618 / DSM 22257 / CCUG 43843 / 130Z).